A 22-amino-acid chain; its full sequence is thr operon leader peptide (22 aa).

This sequence belongs to the thr operon leader peptide family.

Functionally, this protein is involved in control of the biosynthesis of threonine. In Klebsiella pneumoniae (strain 342), this protein is thr operon leader peptide.